Reading from the N-terminus, the 310-residue chain is MQPPGNDAPAGCPFSGARAQGTQAAHEAPHVPGDAGEQAGWHNAQLDFSKSMSYGDYLSLNAILNAQHPLSPDHNEMLFIIQHQTSELWMKLALFELRGALDAVRSDALPPAFKMLARVSRILEQLVQAWNVLSTMTPSEYSAMRPYLGQSSGFQSYQYRQLEFLLGNKNAQMLQPHAHRPDILEQVRATLDAPSFYDEVVRLLARRGFPIAPSRLDRDWRQPTQHDETVEAAWLEVYRHPQQHWELYEMAEELVDLEDAFRQWRFRHVTTVERIIGFKQGTGGTSGAPYLRKMLDVVLFPELWHVRTTL.

A disordered region spans residues 1 to 39 (MQPPGNDAPAGCPFSGARAQGTQAAHEAPHVPGDAGEQA). Substrate is bound by residues 79-83 (FIIQH), Y141, and R145. H268 is a heme binding site. T282 lines the substrate pocket.

This sequence belongs to the tryptophan 2,3-dioxygenase family. Homotetramer. Requires heme as cofactor.

The enzyme catalyses L-tryptophan + O2 = N-formyl-L-kynurenine. Its pathway is amino-acid degradation; L-tryptophan degradation via kynurenine pathway; L-kynurenine from L-tryptophan: step 1/2. Heme-dependent dioxygenase that catalyzes the oxidative cleavage of the L-tryptophan (L-Trp) pyrrole ring and converts L-tryptophan to N-formyl-L-kynurenine. Catalyzes the oxidative cleavage of the indole moiety. This chain is Tryptophan 2,3-dioxygenase, found in Burkholderia multivorans (strain ATCC 17616 / 249).